The sequence spans 642 residues: Threonine--tRNA ligase (642 aa).

The 61-residue stretch at 1–61 folds into the TGS domain; that stretch reads MPVITLPDGS…ENDAQLSIIT (61 aa). Residues 243–534 are catalytic; it reads DHRKIGKQLD…LTEEFAGFFP (292 aa). The residue at position 286 (lysine 286) is an N6-acetyllysine. The Zn(2+) site is built by cysteine 334, histidine 385, and histidine 511.

Belongs to the class-II aminoacyl-tRNA synthetase family. In terms of assembly, homodimer. Requires Zn(2+) as cofactor.

The protein resides in the cytoplasm. It catalyses the reaction tRNA(Thr) + L-threonine + ATP = L-threonyl-tRNA(Thr) + AMP + diphosphate + H(+). Its function is as follows. Catalyzes the attachment of threonine to tRNA(Thr) in a two-step reaction: L-threonine is first activated by ATP to form Thr-AMP and then transferred to the acceptor end of tRNA(Thr). Also edits incorrectly charged L-seryl-tRNA(Thr). The sequence is that of Threonine--tRNA ligase from Escherichia coli O8 (strain IAI1).